The sequence spans 414 residues: Probable 1-acylglycerol-3-phosphate O-acyltransferase (414 aa).

An AB hydrolase-1 domain is found at 117–382 (PTLVMVHGYG…GGHFVFIDNP (266 aa)). The short motif at 193–197 (GHSFG) is the GXSXG element. Positions 375–380 (HFVFID) match the HXXXXD motif motif.

The protein belongs to the peptidase S33 family. ABHD4/ABHD5 subfamily.

Its subcellular location is the cytoplasm. It carries out the reaction a 1-acyl-sn-glycero-3-phosphate + an acyl-CoA = a 1,2-diacyl-sn-glycero-3-phosphate + CoA. Its function is as follows. Lysophosphatidic acid acyltransferase which functions in phosphatidic acid biosynthesis. May regulate neutral lipid accumulation and participate in the regulation of lipid turnover in vegetative cells. May possess additional triacylglycerol lipase and phospholipase A2 activities in vitro. The chain is Probable 1-acylglycerol-3-phosphate O-acyltransferase from Oryza sativa subsp. japonica (Rice).